We begin with the raw amino-acid sequence, 260 residues long: OCIA domain-containing protein 1 (260 aa).

The OCIA domain maps to M1–E110. Residues D146–D260 are disordered. Residues P155–D164 are compositionally biased toward polar residues. Residues E205–Y215 are compositionally biased toward basic and acidic residues.

The protein belongs to the OCIAD1 family.

The polypeptide is OCIA domain-containing protein 1 (Drosophila pseudoobscura pseudoobscura (Fruit fly)).